The primary structure comprises 780 residues: Aconitate hydratase, mitochondrial (780 aa).

The transit peptide at 1–27 (MAPYSLLVSRLQKALGARQYHVASVLC) directs the protein to the mitochondrion. K31 carries the post-translational modification N6-succinyllysine. The residue at position 50 (K50) is an N6-acetyllysine; alternate. An N6-succinyllysine; alternate modification is found at K50. Q99 is a substrate binding site. Residues K138 and K144 each carry the N6-acetyllysine; alternate modification. N6-succinyllysine; alternate occurs at positions 138 and 144. 192–194 (DSH) lines the substrate pocket. K233 is subject to N6-acetyllysine; alternate. N6-succinyllysine; alternate is present on K233. Residue C385 coordinates [4Fe-4S] cluster. The residue at position 411 (K411) is an N6-succinyllysine. C448 and C451 together coordinate [4Fe-4S] cluster. Substrate-binding residues include R474 and R479. K517 and K523 each carry N6-acetyllysine; alternate. An N6-succinyllysine; alternate mark is found at K517 and K523. Over residues 524 to 537 (LEAPDADELPRAEF) the composition is skewed to basic and acidic residues. Residues 524–560 (LEAPDADELPRAEFDPGQDTYQHPPKDSSGQQVDVSP) are disordered. K549 bears the N6-succinyllysine mark. The segment covering 551-560 (SSGQQVDVSP) has biased composition (polar residues). Residue S559 is modified to Phosphoserine. N6-acetyllysine; alternate is present on K573. At K573 the chain carries N6-succinyllysine; alternate. K591 is subject to N6-succinyllysine. Residue K605 is modified to N6-acetyllysine; alternate. At K605 the chain carries N6-succinyllysine; alternate. A substrate-binding site is contributed by R607. K628 carries the post-translational modification N6-succinyllysine. Phosphoserine is present on S670. Residue 670–671 (SR) coordinates substrate. Residue K689 is modified to N6-succinyllysine. 2 positions are modified to N6-acetyllysine; alternate: K723 and K730. Residues K723 and K730 each carry the N6-succinyllysine; alternate modification. Residues K736 and K743 each carry the N6-acetyllysine modification.

The protein belongs to the aconitase/IPM isomerase family. As to quaternary structure, monomer. The cofactor is [4Fe-4S] cluster. In terms of processing, forms covalent cross-links mediated by transglutaminase TGM2, between a glutamine and the epsilon-amino group of a lysine residue, forming homopolymers and heteropolymers.

The protein resides in the mitochondrion. It carries out the reaction citrate = D-threo-isocitrate. It functions in the pathway carbohydrate metabolism; tricarboxylic acid cycle; isocitrate from oxaloacetate: step 2/2. Functionally, catalyzes the isomerization of citrate to isocitrate via cis-aconitate. The sequence is that of Aconitate hydratase, mitochondrial (ACO2) from Bos taurus (Bovine).